A 391-amino-acid chain; its full sequence is 3-ketoacyl-CoA thiolase (391 aa).

The active-site Acyl-thioester intermediate is Cys-95. Active-site proton acceptor residues include His-347 and Cys-377.

This sequence belongs to the thiolase-like superfamily. Thiolase family. In terms of assembly, heterotetramer of two alpha chains (FadB) and two beta chains (FadA).

It is found in the cytoplasm. The enzyme catalyses an acyl-CoA + acetyl-CoA = a 3-oxoacyl-CoA + CoA. The protein operates within lipid metabolism; fatty acid beta-oxidation. Catalyzes the final step of fatty acid oxidation in which acetyl-CoA is released and the CoA ester of a fatty acid two carbons shorter is formed. In Vibrio parahaemolyticus serotype O3:K6 (strain RIMD 2210633), this protein is 3-ketoacyl-CoA thiolase.